The sequence spans 75 residues: Protein P8 (75 aa).

The interval 19 to 47 (PMGGMPSIASSSSAETGQQTQSGNFTGGG) is disordered. The span at 26-39 (IASSSSAETGQQTQ) shows a compositional bias: polar residues. Residues 55-72 (NNQLLIVGAVVIGLFLVI) form a helical membrane-spanning segment.

The protein localises to the virion membrane. This is Protein P8 (VIII) from Pseudoalteromonas phage PM2 (Bacteriophage PM2).